A 416-amino-acid chain; its full sequence is Pentraxin fusion protein (416 aa).

Positions 1-14 are cleaved as a signal peptide; that stretch reads MKSLLLFLKSQVFG. Asn-129 carries an N-linked (GlcNAc...) asparagine glycan. The tract at residues 184-206 is disordered; it reads GTEASDSSESVDGTEAPASPESD. One can recognise a Pentraxin (PTX) domain in the interval 220-416; the sequence is TNKSFMFPKE…YSMIGNVAEV (197 aa). The N-linked (GlcNAc...) asparagine glycan is linked to Asn-221. A disulfide bridge connects residues Cys-251 and Cys-311. Residues Asp-275, Gln-353, Asp-354, and Gln-364 each contribute to the Ca(2+) site.

Ca(2+) serves as cofactor.

This is Pentraxin fusion protein (pxn1) from Xenopus laevis (African clawed frog).